Consider the following 53-residue polypeptide: MPVLPGTQRYPHQRRRFQAAGGGAESGKRGSEEAPGVAWSGSESGRDAATPAW.

The interval 1-53 (MPVLPGTQRYPHQRRRFQAAGGGAESGKRGSEEAPGVAWSGSESGRDAATPAW) is disordered.

Interacts with HNRNPA1 (via the RGG-box). Interacts with IGF2BP2.

In terms of biological role, blocks the binding of HNRNPA1 to the intronic sequences flanking exon 9 of the PKM gene by competitively binding to the HNRNPA1 RGG-box motif. This inhibits inclusion of exon 9 and promotes inclusion of exon 10, suppressing formation of the PKM M2 isoform and promoting production of the M1 isoform. Also suppresses HNRNPA1-mediated processing of microRNA 18a (miR-18a). Promotes MYC stability through interaction with IGF2BP2. The sequence is that of HOXB-AS3 peptide from Homo sapiens (Human).